Here is a 461-residue protein sequence, read N- to C-terminus: Ribosomal RNA processing protein 1 homolog A (461 aa).

Residues 239–252 (QDEEVASDSDESSE) are compositionally biased toward acidic residues. Disordered stretches follow at residues 239-295 (QDEE…GGPV) and 354-461 (EGRR…KRRE). Residues Ser-245, Ser-247, Ser-250, and Ser-251 each carry the phosphoserine modification. The segment covering 253–267 (GGERGDALSQKRSEK) has biased composition (basic and acidic residues). Positions 357–368 (RQKKTKKQKRLL) are enriched in basic residues. Over residues 371 to 381 (QQERGKGEKEP) the composition is skewed to basic and acidic residues. Ser-383 is subject to Phosphoserine. Thr-412 is modified (phosphothreonine). Basic residues predominate over residues 425–437 (RGQRGARQRRRTP). Residue Gln-427 is modified to N5-methylglutamine.

The protein belongs to the RRP1 family. Interacts with C1QBP. Interacts with RRP1B. Post-translationally, methylated at Gln-427 by N6AMT1. Ubiquitously expressed in fetal and adult tissues.

It localises to the nucleus. It is found in the nucleolus. In terms of biological role, plays a critical role in the generation of 28S rRNA. This Homo sapiens (Human) protein is Ribosomal RNA processing protein 1 homolog A (RRP1).